The chain runs to 359 residues: 3-dehydroquinate synthase (359 aa).

NAD(+) contacts are provided by residues 71 to 76 (DGEAYK), 105 to 109 (GVVGD), 129 to 130 (TT), K142, and K151. Zn(2+) is bound by residues E184, H247, and H264.

It belongs to the sugar phosphate cyclases superfamily. Dehydroquinate synthase family. Co(2+) serves as cofactor. Zn(2+) is required as a cofactor. Requires NAD(+) as cofactor.

It localises to the cytoplasm. It carries out the reaction 7-phospho-2-dehydro-3-deoxy-D-arabino-heptonate = 3-dehydroquinate + phosphate. It participates in metabolic intermediate biosynthesis; chorismate biosynthesis; chorismate from D-erythrose 4-phosphate and phosphoenolpyruvate: step 2/7. Its function is as follows. Catalyzes the conversion of 3-deoxy-D-arabino-heptulosonate 7-phosphate (DAHP) to dehydroquinate (DHQ). The chain is 3-dehydroquinate synthase from Burkholderia orbicola (strain MC0-3).